The following is a 112-amino-acid chain: Putative pterin-4-alpha-carbinolamine dehydratase (112 aa).

It belongs to the pterin-4-alpha-carbinolamine dehydratase family.

It carries out the reaction (4aS,6R)-4a-hydroxy-L-erythro-5,6,7,8-tetrahydrobiopterin = (6R)-L-erythro-6,7-dihydrobiopterin + H2O. The protein is Putative pterin-4-alpha-carbinolamine dehydratase of Shewanella denitrificans (strain OS217 / ATCC BAA-1090 / DSM 15013).